Reading from the N-terminus, the 58-residue chain is Potassium channel toxin alpha-KTx BmKcug1a (58 aa).

Residues 1–21 form the signal peptide; the sequence is MKISFLLLLAIVICSIGWTEA. A Pyrrolidone carboxylic acid modification is found at Gln22. 3 disulfide bridges follow: Cys28–Cys49, Cys34–Cys54, and Cys38–Cys56.

It belongs to the short scorpion toxin superfamily. Potassium channel inhibitor family. Alpha-KTx 01 subfamily. As to expression, expressed by the venom gland.

The protein resides in the secreted. In terms of biological role, potent blocker of both large-conductance calcium-activated potassium channels (KCa1.1/KCNMA1) and voltage-gated potassium channels (Kv1.3/KCNA3 and ERG1/Kv11.1/KCNH2). The chain is Potassium channel toxin alpha-KTx BmKcug1a from Olivierus martensii (Manchurian scorpion).